The following is a 166-amino-acid chain: Small ribosomal subunit protein uS5 (166 aa).

One can recognise an S5 DRBM domain in the interval 11–74 (LEDRVVSINR…EDAKKNLINV (64 aa)).

The protein belongs to the universal ribosomal protein uS5 family. In terms of assembly, part of the 30S ribosomal subunit. Contacts proteins S4 and S8.

With S4 and S12 plays an important role in translational accuracy. In terms of biological role, located at the back of the 30S subunit body where it stabilizes the conformation of the head with respect to the body. This is Small ribosomal subunit protein uS5 from Latilactobacillus sakei subsp. sakei (strain 23K) (Lactobacillus sakei subsp. sakei).